A 162-amino-acid chain; its full sequence is MAFMEKIFPDILEAIRNEEIIKESKKIPMPYFGLFALVIFDKVKELGSETSLYEIGEEFGKMLSPKNIEELKKIFKLMNFGDLEIDENKILLKNPPYKIKLSNPPYQWVSKEEPIHDFIAGILAGCLEEIFKKKFVVNEVECVSQGKDKCVFEVKEVDELNK.

This sequence belongs to the M.jannaschii MJ0150/MJ0739/MJ0745/MJ1460/MJ1642 family.

This is an uncharacterized protein from Methanocaldococcus jannaschii (strain ATCC 43067 / DSM 2661 / JAL-1 / JCM 10045 / NBRC 100440) (Methanococcus jannaschii).